Here is a 231-residue protein sequence, read N- to C-terminus: 7-cyano-7-deazaguanine synthase (231 aa).

8 to 18 lines the ATP pocket; it reads FSGGQDSTTCL. Zn(2+) contacts are provided by cysteine 188, cysteine 197, cysteine 200, and cysteine 203.

It belongs to the QueC family. Requires Zn(2+) as cofactor.

The catalysed reaction is 7-carboxy-7-deazaguanine + NH4(+) + ATP = 7-cyano-7-deazaguanine + ADP + phosphate + H2O + H(+). Its pathway is purine metabolism; 7-cyano-7-deazaguanine biosynthesis. In terms of biological role, catalyzes the ATP-dependent conversion of 7-carboxy-7-deazaguanine (CDG) to 7-cyano-7-deazaguanine (preQ(0)). This chain is 7-cyano-7-deazaguanine synthase, found in Salmonella agona (strain SL483).